Reading from the N-terminus, the 351-residue chain is UDP-N-acetylglucosamine--N-acetylmuramyl-(pentapeptide) pyrophosphoryl-undecaprenol N-acetylglucosamine transferase (351 aa).

UDP-N-acetyl-alpha-D-glucosamine is bound by residues 13–15 (TGG), asparagine 125, arginine 161, serine 189, isoleucine 241, 260–265 (ALTVCE), and glutamine 285.

The protein belongs to the glycosyltransferase 28 family. MurG subfamily.

The protein localises to the cell inner membrane. It carries out the reaction di-trans,octa-cis-undecaprenyl diphospho-N-acetyl-alpha-D-muramoyl-L-alanyl-D-glutamyl-meso-2,6-diaminopimeloyl-D-alanyl-D-alanine + UDP-N-acetyl-alpha-D-glucosamine = di-trans,octa-cis-undecaprenyl diphospho-[N-acetyl-alpha-D-glucosaminyl-(1-&gt;4)]-N-acetyl-alpha-D-muramoyl-L-alanyl-D-glutamyl-meso-2,6-diaminopimeloyl-D-alanyl-D-alanine + UDP + H(+). Its pathway is cell wall biogenesis; peptidoglycan biosynthesis. In terms of biological role, cell wall formation. Catalyzes the transfer of a GlcNAc subunit on undecaprenyl-pyrophosphoryl-MurNAc-pentapeptide (lipid intermediate I) to form undecaprenyl-pyrophosphoryl-MurNAc-(pentapeptide)GlcNAc (lipid intermediate II). The protein is UDP-N-acetylglucosamine--N-acetylmuramyl-(pentapeptide) pyrophosphoryl-undecaprenol N-acetylglucosamine transferase of Haemophilus influenzae (strain PittGG).